Here is a 298-residue protein sequence, read N- to C-terminus: MRGLDYKWIEALDAVVAQGGFERAAEELYISQSAVSQRIKQLERFLAQSVLIREQPPKPTPVGKKLLGLYRRVRILEHELIPELMNDDTAKPIQLALATNADSLATWLLPALKEVMTQRQVELNLAIYGESRSIEKLKSGEVAGAISLESQPIAGCKADYLGRMDYVCVASPDFYQRYFAAGVNYQTLRKAPAVSYDQYDDLHNRFLHDHFNISRDSIINHNVGSSEAFVRLAVSGIAYCLIPKLQIEQELASGVLMDITPGFLLSYRIYWHHWQLESGVLKEISQAIVQYAQAHLPL.

Positions 4-60 (LDYKWIEALDAVVAQGGFERAAEELYISQSAVSQRIKQLERFLAQSVLIREQPPKPT) constitute an HTH lysR-type domain. Residues 21 to 40 (FERAAEELYISQSAVSQRIK) constitute a DNA-binding region (H-T-H motif).

This sequence belongs to the LysR transcriptional regulatory family. In terms of assembly, homodimer.

Controls the transcription of genes involved in arginine and lysine metabolism. This Vibrio vulnificus (strain YJ016) protein is HTH-type transcriptional regulator ArgP.